Reading from the N-terminus, the 279-residue chain is Shikimate dehydrogenase (NADP(+)) (279 aa).

Shikimate-binding positions include 21-23 and Thr68; that span reads SRS. The Proton acceptor role is filled by Lys72. Residue Asp83 coordinates NADP(+). 2 residues coordinate shikimate: Asn92 and Asp107. NADP(+) contacts are provided by residues 132 to 136, 156 to 161, and Leu221; these read GAGGA and NRTVER. Tyr223 is a shikimate binding site. Gly244 contacts NADP(+).

It belongs to the shikimate dehydrogenase family. Homodimer.

It catalyses the reaction shikimate + NADP(+) = 3-dehydroshikimate + NADPH + H(+). Its pathway is metabolic intermediate biosynthesis; chorismate biosynthesis; chorismate from D-erythrose 4-phosphate and phosphoenolpyruvate: step 4/7. In terms of biological role, involved in the biosynthesis of the chorismate, which leads to the biosynthesis of aromatic amino acids. Catalyzes the reversible NADPH linked reduction of 3-dehydroshikimate (DHSA) to yield shikimate (SA). The sequence is that of Shikimate dehydrogenase (NADP(+)) from Nitrobacter winogradskyi (strain ATCC 25391 / DSM 10237 / CIP 104748 / NCIMB 11846 / Nb-255).